Here is a 556-residue protein sequence, read N- to C-terminus: Glutamine--tRNA ligase (556 aa).

Positions 34-44 (PEPNGYLHIGH) match the 'HIGH' region motif. ATP is bound by residues 35 to 37 (EPN) and 41 to 47 (HIGHAKS). Residues aspartate 67 and tyrosine 212 each contribute to the L-glutamine site. Residues threonine 231, 261 to 262 (RL), and 269 to 271 (MSK) contribute to the ATP site. The 'KMSKS' region motif lies at 268 to 272 (IMSKR).

This sequence belongs to the class-I aminoacyl-tRNA synthetase family. As to quaternary structure, monomer.

Its subcellular location is the cytoplasm. It carries out the reaction tRNA(Gln) + L-glutamine + ATP = L-glutaminyl-tRNA(Gln) + AMP + diphosphate. The chain is Glutamine--tRNA ligase from Sodalis glossinidius (strain morsitans).